The following is a 1386-amino-acid chain: Rab3 GTPase-activating protein non-catalytic subunit (1386 aa).

A disordered region spans residues 31 to 69; that stretch reads GALRRDPSKTSNWEDDSWGAWEETEPQEPEEEGNTSKTQ. Phosphoserine is present on Ser38. Positions 43–63 are enriched in acidic residues; sequence WEDDSWGAWEETEPQEPEEEG. Position 448 is a phosphoserine (Ser448). Position 899 is a phosphothreonine (Thr899). Ser914 bears the Phosphoserine mark. Basic and acidic residues predominate over residues 959–973; sequence REKDVENPDEPREGI. The disordered stretch occupies residues 959-982; the sequence is REKDVENPDEPREGIARSPPEVSE. Ser976 carries the phosphoserine modification.

The protein belongs to the Rab3-GAP regulatory subunit family. As to quaternary structure, the Rab3 GTPase-activating complex is a heterodimer composed of Rab3gap1 and Rab3gap2. The Rab3 GTPase-activating complex interacts with DMXL2. Interacts with LMAN1.

The protein localises to the cytoplasm. Its subcellular location is the endoplasmic reticulum. Regulatory subunit of the Rab3 GTPase-activating (Rab3GAP) complex composed of RAB3GAP1 and RAB3GAP2, which has GTPase-activating protein (GAP) activity towards various Rab3 subfamily members (RAB3A, RAB3B, RAB3C and RAB3D), RAB5A and RAB43, and guanine nucleotide exchange factor (GEF) activity towards RAB18. As part of the Rab3GAP complex, acts as a GAP for Rab3 proteins by converting active RAB3-GTP to the inactive form RAB3-GDP. Rab3 proteins are involved in regulated exocytosis of neurotransmitters and hormones. The Rab3GAP complex acts as a GEF for RAB18 by promoting the conversion of inactive RAB18-GDP to the active form RAB18-GTP. Recruits and stabilizes RAB18 at the cis-Golgi membrane in fibroblasts where RAB18 is most likely activated. Also involved in RAB18 recruitment at the endoplasmic reticulum (ER) membrane where it maintains proper ER structure. Required for normal eye and brain development. May participate in neurodevelopmental processes such as proliferation, migration and differentiation before synapse formation, and non-synaptic vesicular release of neurotransmitters. This chain is Rab3 GTPase-activating protein non-catalytic subunit, found in Rattus norvegicus (Rat).